Here is a 266-residue protein sequence, read N- to C-terminus: Gas vesicle protein L (266 aa).

Belongs to the gas vesicle GvpF/GvpL family.

Its subcellular location is the gas vesicle. In terms of biological role, might be involved in nucleating gas vesicle formation. A minor component of the gas vesicle. Gas vesicles are hollow, gas filled proteinaceous nanostructures found in some microorganisms. It is not clear what function gas vesicles perform in soil bacteria. This Streptomyces sp. (strain CB03234) protein is Gas vesicle protein L.